A 108-amino-acid chain; its full sequence is UPF0145 protein THA_1434 (108 aa).

Belongs to the UPF0145 family.

This chain is UPF0145 protein THA_1434, found in Thermosipho africanus (strain TCF52B).